Consider the following 240-residue polypeptide: MIVFIVLPILAAVLQQSSGNVDFDSESPRKPEIQNEIVDLHNSLRRSVNPTASNMLKMEWYPEAAANAERWAYRCIEDHSSPDSRVLEGIKCGENIYMSPIPMKWTDIIHIWHDEYKNFKYGIGADPPNAVSGHFTQIVWYKSYRAGCAAAYCPSSEYSYFYVCQYCPAGNMRGKTATPYTSGPPCGDCPSACDNGLCTNPCTQEDVFTNCNSLVQQSNCQHNYIKTNCPASCFCHNEIK.

The signal sequence occupies residues 1–19; it reads MIVFIVLPILAAVLQQSSG. Residues 38–166 form the SCP domain; the sequence is VDLHNSLRRS…EYSYFYVCQY (129 aa). 8 cysteine pairs are disulfide-bonded: cysteine 75–cysteine 153, cysteine 92–cysteine 167, cysteine 148–cysteine 164, cysteine 186–cysteine 193, cysteine 189–cysteine 198, cysteine 202–cysteine 235, cysteine 211–cysteine 229, and cysteine 220–cysteine 233. Positions 202–235 constitute a ShKT domain; it reads CTQEDVFTNCNSLVQQSNCQHNYIKTNCPASCFC.

Belongs to the CRISP family. As to expression, expressed by the venom gland.

Its subcellular location is the secreted. In terms of biological role, blocks contraction of smooth muscle elicited by high potassium-induced depolarization, but does not block caffeine-stimulated contraction. Since high potassium-treatment activates voltage-gated channels and caffeine exposure activates ryanodine receptors, this toxin may target L-type voltage-gated calcium channels (Cav) (and not ryanodine receptors) on smooth muscle. This toxin also shows a little inhibition on cyclic nucleotide-gated CNGA1 channel. This is Cysteine-rich venom protein ablomin from Gloydius blomhoffii (Mamushi).